The chain runs to 401 residues: UPF0283 membrane protein SO_1811 (401 aa).

Positions 1–22 are disordered; that stretch reads MSVELLPHSTEPHANGADKSVS. The next 3 membrane-spanning stretches (helical) occupy residues 99 to 119, 129 to 149, and 239 to 259; these read LARL…VLGL, LFSF…VGVI, and ESAV…IILW.

Belongs to the UPF0283 family.

Its subcellular location is the cell inner membrane. This is UPF0283 membrane protein SO_1811 from Shewanella oneidensis (strain ATCC 700550 / JCM 31522 / CIP 106686 / LMG 19005 / NCIMB 14063 / MR-1).